The primary structure comprises 78 residues: Large ribosomal subunit protein bL28 (78 aa).

The interval 1 to 22 is disordered; the sequence is MAKVCQVTGKRPVTGHNVSHAK.

It belongs to the bacterial ribosomal protein bL28 family.

This Saccharophagus degradans (strain 2-40 / ATCC 43961 / DSM 17024) protein is Large ribosomal subunit protein bL28.